A 132-amino-acid polypeptide reads, in one-letter code: 3-aminoacrylate deaminase RutC (132 aa).

It belongs to the RutC family.

It carries out the reaction (Z)-3-aminoacrylate + H2O + H(+) = 3-oxopropanoate + NH4(+). Functionally, involved in pyrimidine catabolism. Catalyzes the deamination of 3-aminoacrylate to malonic semialdehyde, a reaction that can also occur spontaneously. RutC may facilitate the reaction and modulate the metabolic fitness, rather than catalyzing essential functions. This Cronobacter turicensis (strain DSM 18703 / CCUG 55852 / LMG 23827 / z3032) protein is 3-aminoacrylate deaminase RutC.